Reading from the N-terminus, the 516-residue chain is Glycerol-3-phosphate dehydrogenase 1 (516 aa).

28–56 contacts FAD; that stretch reads DVIVIGGGITGVGIALDAATRGLTVALVE.

It belongs to the FAD-dependent glycerol-3-phosphate dehydrogenase family. FAD is required as a cofactor.

The protein resides in the cytoplasm. The enzyme catalyses a quinone + sn-glycerol 3-phosphate = dihydroxyacetone phosphate + a quinol. This Mycobacterium bovis (strain ATCC BAA-935 / AF2122/97) protein is Glycerol-3-phosphate dehydrogenase 1 (glpD1).